We begin with the raw amino-acid sequence, 457 residues long: Proton extrusion protein PxcA (457 aa).

The next 4 membrane-spanning stretches (helical) occupy residues 239–259 (FILL…TFFL), 332–352 (INAI…GVVI), 368–390 (GILY…DMFV), and 417–437 (FNFL…KYWI).

Belongs to the CemA family.

The protein resides in the cell inner membrane. Its function is as follows. Required for H(+) efflux immediately after light irradiation to form a rapid H(+) concentration gradient across the thylakoid membranes. Together with PxcL, contributes to transient H(+) uptake following dark to light transition. This chain is Proton extrusion protein PxcA, found in Gloeothece citriformis (strain PCC 7424) (Cyanothece sp. (strain PCC 7424)).